The following is a 615-amino-acid chain: UvrABC system protein C (615 aa).

The 78-residue stretch at 14-91 (TSPGCYIHKD…IKENKPKYNI (78 aa)) folds into the GIY-YIG domain. The UVR domain maps to 196-231 (NKIIDELKGKMAAAAQTMEFERAAEYRDLIQAIGTL).

This sequence belongs to the UvrC family. Interacts with UvrB in an incision complex.

The protein resides in the cytoplasm. In terms of biological role, the UvrABC repair system catalyzes the recognition and processing of DNA lesions. UvrC both incises the 5' and 3' sides of the lesion. The N-terminal half is responsible for the 3' incision and the C-terminal half is responsible for the 5' incision. In Streptococcus pneumoniae (strain JJA), this protein is UvrABC system protein C.